We begin with the raw amino-acid sequence, 168 residues long: Protein-export protein SecB (168 aa).

The interval 1 to 20 is disordered; it reads MTDETAANGENEAGRQSQSS.

Belongs to the SecB family. In terms of assembly, homotetramer, a dimer of dimers. One homotetramer interacts with 1 SecA dimer.

The protein resides in the cytoplasm. Its function is as follows. One of the proteins required for the normal export of preproteins out of the cell cytoplasm. It is a molecular chaperone that binds to a subset of precursor proteins, maintaining them in a translocation-competent state. It also specifically binds to its receptor SecA. The protein is Protein-export protein SecB of Rhodospirillum centenum (strain ATCC 51521 / SW).